The sequence spans 1150 residues: ATP-dependent helicase/deoxyribonuclease subunit B (1150 aa).

8 to 15 (GRAGSGKS) is an ATP binding site. [4Fe-4S] cluster is bound by residues C786, C1106, C1109, and C1115.

The protein belongs to the helicase family. AddB/RexB type 1 subfamily. Heterodimer of AddA and AddB. Requires Mg(2+) as cofactor. [4Fe-4S] cluster is required as a cofactor.

In terms of biological role, the heterodimer acts as both an ATP-dependent DNA helicase and an ATP-dependent, dual-direction single-stranded exonuclease. Recognizes the chi site generating a DNA molecule suitable for the initiation of homologous recombination. The AddB subunit has 5' -&gt; 3' nuclease activity but not helicase activity. The sequence is that of ATP-dependent helicase/deoxyribonuclease subunit B from Clostridium botulinum (strain Okra / Type B1).